A 553-amino-acid chain; its full sequence is Zinc finger CCHC domain-containing protein 8 homolog (553 aa).

At S59 the chain carries Phosphoserine. A CCHC-type zinc finger spans residues 183–200; that stretch reads SSCFNCGDTEHSLRDCTK. Residues S292 and S347 each carry the phosphoserine modification. Residue Y356 is modified to Phosphotyrosine. Residues 388-492 form a disordered region; sequence LEEETEDPPL…APSTPFKASY (105 aa). Residues 395 to 409 show a composition bias toward pro residues; that stretch reads PPLPPSVPPPQPPPP. Residues S421 and S423 each carry the phosphoserine modification. Polar residues-rich tracts occupy residues 444–456 and 473–485; these read ASHN…SKSP and ESGN…SAPS.

Belongs to the ZCCHC8 family.

The protein resides in the nucleus. Its subcellular location is the nucleoplasm. Its function is as follows. Scaffolding subunit of the trimeric nuclear exosome targeting (NEXT) complex, a complex that directs a subset of non-coding short-lived RNAs for exosomal degradation. The RNA exosome is fundamental for the degradation of RNA in eukaryotic nuclei. May be involved in pre-mRNA splicing. The chain is Zinc finger CCHC domain-containing protein 8 homolog from Drosophila melanogaster (Fruit fly).